Reading from the N-terminus, the 118-residue chain is Immunoglobulin heavy variable 4-31 (118 aa).

The N-terminal stretch at methionine 1–serine 19 is a signal peptide. Residues glutamine 20–serine 44 are framework-1. An Ig-like domain is found at glutamine 20–arginine 118. Cysteine 41 and cysteine 116 are oxidised to a cystine. The segment at glycine 45–tyrosine 54 is complementarity-determining-1. The tract at residues tryptophan 55–tyrosine 71 is framework-2. The interval isoleucine 72–threonine 78 is complementarity-determining-2. The framework-3 stretch occupies residues tyrosine 79–cysteine 116. Residues alanine 117–arginine 118 form a complementarity-determining-3 region.

As to quaternary structure, immunoglobulins are composed of two identical heavy chains and two identical light chains; disulfide-linked.

It is found in the secreted. The protein resides in the cell membrane. In terms of biological role, v region of the variable domain of immunoglobulin heavy chains that participates in the antigen recognition. Immunoglobulins, also known as antibodies, are membrane-bound or secreted glycoproteins produced by B lymphocytes. In the recognition phase of humoral immunity, the membrane-bound immunoglobulins serve as receptors which, upon binding of a specific antigen, trigger the clonal expansion and differentiation of B lymphocytes into immunoglobulins-secreting plasma cells. Secreted immunoglobulins mediate the effector phase of humoral immunity, which results in the elimination of bound antigens. The antigen binding site is formed by the variable domain of one heavy chain, together with that of its associated light chain. Thus, each immunoglobulin has two antigen binding sites with remarkable affinity for a particular antigen. The variable domains are assembled by a process called V-(D)-J rearrangement and can then be subjected to somatic hypermutations which, after exposure to antigen and selection, allow affinity maturation for a particular antigen. The protein is Immunoglobulin heavy variable 4-31 of Homo sapiens (Human).